The following is a 34-amino-acid chain: Photosystem II reaction center protein M (34 aa).

Residues 5–25 (ILAFIATALFILIPTAFLLII) form a helical membrane-spanning segment.

The protein belongs to the PsbM family. In terms of assembly, PSII is composed of 1 copy each of membrane proteins PsbA, PsbB, PsbC, PsbD, PsbE, PsbF, PsbH, PsbI, PsbJ, PsbK, PsbL, PsbM, PsbT, PsbX, PsbY, PsbZ, Psb30/Ycf12, at least 3 peripheral proteins of the oxygen-evolving complex and a large number of cofactors. It forms dimeric complexes.

The protein resides in the plastid. The protein localises to the chloroplast thylakoid membrane. Functionally, one of the components of the core complex of photosystem II (PSII). PSII is a light-driven water:plastoquinone oxidoreductase that uses light energy to abstract electrons from H(2)O, generating O(2) and a proton gradient subsequently used for ATP formation. It consists of a core antenna complex that captures photons, and an electron transfer chain that converts photonic excitation into a charge separation. This subunit is found at the monomer-monomer interface. This Agrostis stolonifera (Creeping bentgrass) protein is Photosystem II reaction center protein M.